Consider the following 918-residue polypeptide: NEDD4-like E3 ubiquitin-protein ligase WWP1 (918 aa).

Positions 1–116 (MATASPRSDT…THNRKLEKVK (116 aa)) constitute a C2 domain. Polar residues-rich tracts occupy residues 150–164 (TNRS…QQNG), 209–219 (NGENTPSSPSQ), and 235–258 (SAPT…STMG). Disordered regions lie at residues 150 to 182 (TNRS…PRLP) and 209 to 360 (NGEN…PHGR). The span at 266 to 281 (TTSTSNCTSTTTQEPP) shows a compositional bias: low complexity. 4 WW domains span residues 345–378 (EALP…RPQP), 377–410 (QPLP…RPTM), 452–485 (GPLP…DPRT), and 492–525 (EPLP…DPRN). Residues 345 to 525 (EALPSGWEQR…RTTTFKDPRN (181 aa)) form an interaction with ERBB4 region. Residues 345-527 (EALPSGWEQR…TTFKDPRNGK (183 aa)) are required for interaction with and ubiquitination of AMOTL2. Required for interaction with YAP1. An HECT domain is found at 584-918 (KPYDLRRRLY…IEETEGFGQE (335 aa)). Residue C886 is the Glycyl thioester intermediate of the active site.

In terms of assembly, interacts with the Crumbs complex components PALS1 and PATJ; interaction with the Crumbs complex is enhanced by WWP1's interaction with AMOTL2 and facilitates WWP1 localization to the plasma membrane. Interaction with the Crumbs complex promotes WWP1 monoubiquitination of AMOTL2, which activates the Hippo signaling pathway. Binds SCNN1A, SCNN1B, SCNN1G, WBP1, WBP2, DRPLA and adenovirus type 2 PIII. Interacts with TGIF. Binds KLF2 AND HIVEP3. Interacts with RNF11. Interacts with SPART. Interacts with NDFIP1 and NDFIP2; this interaction activates the E3 ubiquitin-protein ligase. Interacts with ERBB4 isoforms JM-B CYT-1 and JM-A CYT-1. Does not interact with ERB4 isoform JMA-A CYT-2. Interacts with SMAD1, SMAD2, SMAD3, SMAD5, SMAD6, SMAD7, TGFBR1 and TGFBR2. Associates with the TGFBR1:TGFBR2 receptor complex in presence of SMAD7. Interacts with SKIL isoform 1. Interacts with TP63 isoform 1 and isoform 2. Interacts (via WW domains) with ARRDC1, ARRDC2 and ARRDC3. In terms of processing, auto-ubiquitinated and ubiquitinated by RNF11.

Its subcellular location is the cytoplasm. The protein resides in the cell membrane. The protein localises to the nucleus. It is found in the cell junction. The catalysed reaction is S-ubiquitinyl-[E2 ubiquitin-conjugating enzyme]-L-cysteine + [acceptor protein]-L-lysine = [E2 ubiquitin-conjugating enzyme]-L-cysteine + N(6)-ubiquitinyl-[acceptor protein]-L-lysine.. It functions in the pathway protein modification; protein ubiquitination. Its activity is regulated as follows. Activated by NDFIP1- and NDFIP2-binding. In terms of biological role, E3 ubiquitin-protein ligase which accepts ubiquitin from an E2 ubiquitin-conjugating enzyme in the form of a thioester and then directly transfers the ubiquitin to targeted substrates. Ubiquitinates and promotes degradation of SMAD2 in response to TGF-beta signaling, which requires interaction with TGIF. Ubiquitinates ERBB4 isoforms JM-A CYT-1 and JM-B CYT-1, KLF2, KLF5 and TP63 and promotes their proteasomal degradation. Ubiquitinates RNF11 without targeting it for degradation. Ubiquitinates and promotes degradation of TGFBR1; the ubiquitination is enhanced by SMAD7. Ubiquitinates SMAD6 and SMAD7. Activates the Hippo signaling pathway in response to cell contact inhibition and recruitment to the Crumbs complex at the cell membrane. Monoubiquitinates AMOTL2 which facilitates its interaction with and activation of LATS2. LATS2 then phosphorylates YAP1, excluding it from the nucleus and therefore ultimately represses YAP1-driven transcription of target genes. The protein is NEDD4-like E3 ubiquitin-protein ligase WWP1 (Wwp1) of Mus musculus (Mouse).